Reading from the N-terminus, the 393-residue chain is Homoserine O-succinyltransferase (393 aa).

An AB hydrolase-1 domain is found at 62 to 372 (NAVLVCHALN…PHGHDAFLLD (311 aa)). Ser168 serves as the catalytic Nucleophile. Residue Arg238 coordinates substrate. Catalysis depends on residues Asp333 and His366. Asp367 serves as a coordination point for substrate.

It belongs to the AB hydrolase superfamily. MetX family. In terms of assembly, homodimer.

It is found in the cytoplasm. It catalyses the reaction L-homoserine + succinyl-CoA = O-succinyl-L-homoserine + CoA. It participates in amino-acid biosynthesis; L-methionine biosynthesis via de novo pathway; O-succinyl-L-homoserine from L-homoserine: step 1/1. In terms of biological role, transfers a succinyl group from succinyl-CoA to L-homoserine, forming succinyl-L-homoserine. This chain is Homoserine O-succinyltransferase, found in Cupriavidus taiwanensis (strain DSM 17343 / BCRC 17206 / CCUG 44338 / CIP 107171 / LMG 19424 / R1) (Ralstonia taiwanensis (strain LMG 19424)).